The chain runs to 281 residues: General control transcription factor GCN4 (281 aa).

S17 carries the phosphoserine modification. Required for transcriptional activation stretches follow at residues 89-100 (LDDAVVESFFSS) and 106-125 (PMFEYENLEDNSKEWTSLFD). A Phosphothreonine; by PHO85 modification is found at T165. The Nuclear localization signal motif lies at 167-200 (VLEDAKLTQTRKVKKPNSVVKKSHHVGKDDESRL). The disordered stretch occupies residues 217-248 (LSPIVPESSDPAALKRARNTEAARRSRARKLQ). At S218 the chain carries Phosphoserine. A bZIP domain is found at 225 to 281 (SDPAALKRARNTEAARRSRARKLQRMKQLEDKVEELLSKNYHLENEVARLKKLVGER). The short motif at 231 to 249 (KRARNTEAARRSRARKLQR) is the Nuclear localization signal element. The tract at residues 231 to 251 (KRARNTEAARRSRARKLQRMK) is basic motif. The interval 253–274 (LEDKVEELLSKNYHLENEVARL) is leucine-zipper.

The protein belongs to the bZIP family. GCN4 subfamily. As to quaternary structure, homodimer. Each subunit binds overlapping and non-identical half-sites that flank the central CG base-pair in the pseudo-palindromic motif 5'-ATGA[CG]TCAT-3'. Interacts with the mediator tail; the interaction with GAL11/MED15 is direct. Interacts with the SAGA histone acetyltransferase complex. Interacts with the SWI/SNF chromatin remodeling complex. Phosphorylated by the cyclin-CDK PCL5-PHO85. Phosphorylation of Thr-165 induces degradation of GCN4 by the E3 ubiquitin ligase complex SCF(Cdc4).

The protein resides in the nucleus. Its function is as follows. Master transcriptional regulator that mediates the response to amino acid starvation. Binds variations of the DNA sequence 5'-ATGA[CG]TCAT-3' in canonical nucleosome-depleted 5'-positioned promoters, and also within coding sequences and 3' non-coding regions. During nutrient starvation (low or poor amino acid, carbon or purine sources), it activates genes required for amino acid biosynthesis and transport, autophagy, cofactor biosynthesis and transport, mitochondrial transport, and additional downstream transcription factors. Activates transcription by recruiting multiple coactivators, including the mediator complex, the SAGA complex, and the SWI/SNF complex, to enable assembly of the pre-initiation complex at core promoters. In Saccharomyces cerevisiae (strain ATCC 204508 / S288c) (Baker's yeast), this protein is General control transcription factor GCN4.